Here is a 500-residue protein sequence, read N- to C-terminus: Arabinofuranosidase/B-xylosidase (500 aa).

Residues 1 to 21 form the signal peptide; it reads MLSNARIIAAGCIAAGSLVAA. N-linked (GlcNAc...) asparagine glycosylation is present at Asn467.

Belongs to the glycosyl hydrolase 54 family.

It catalyses the reaction Hydrolysis of terminal non-reducing alpha-L-arabinofuranoside residues in alpha-L-arabinosides.. The enzyme catalyses Hydrolysis of (1-&gt;4)-beta-D-xylans, to remove successive D-xylose residues from the non-reducing termini.. This is Arabinofuranosidase/B-xylosidase (xyl1) from Trichoderma koningii (Hypocrea koningii).